Here is a 158-residue protein sequence, read N- to C-terminus: Protein OPG060 (158 aa).

This sequence belongs to the orthopoxvirus OPG058 family.

This chain is Protein OPG060 (OPG060), found in Cynomys gunnisoni (Gunnison's prairie dog).